We begin with the raw amino-acid sequence, 235 residues long: Transmembrane protein 215 (235 aa).

2 helical membrane passes run 12 to 32 (LVVA…VSGM) and 40 to 60 (IPLL…IALA). Residues 99 to 158 (SDLESGKGSSDELAKKAGLRGKPSLQGQGELPMASSITTPTPMEEGECQSPGQSGRREET) are disordered.

It is found in the membrane. The protein is Transmembrane protein 215 (TMEM215) of Bos taurus (Bovine).